The sequence spans 225 residues: Uracil-DNA glycosylase (225 aa).

The active-site Proton acceptor is D61.

It belongs to the uracil-DNA glycosylase (UDG) superfamily. UNG family.

It is found in the cytoplasm. It carries out the reaction Hydrolyzes single-stranded DNA or mismatched double-stranded DNA and polynucleotides, releasing free uracil.. In terms of biological role, excises uracil residues from the DNA which can arise as a result of misincorporation of dUMP residues by DNA polymerase or due to deamination of cytosine. The sequence is that of Uracil-DNA glycosylase from Actinobacillus pleuropneumoniae serotype 5b (strain L20).